Consider the following 329-residue polypeptide: Putative HTH-type transcriptional regulatory protein APE_0778 (329 aa).

The region spanning 142–200 (LREKRLEKGLSLGHLAYMLKTSRKSIYEYERGVMSPSVEKAEKLVDILGEEILEPIDIL) is the HTH cro/C1-type domain. A DNA-binding region (H-T-H motif) is located at residues 153-172 (LGHLAYMLKTSRKSIYEYER).

This chain is Putative HTH-type transcriptional regulatory protein APE_0778, found in Aeropyrum pernix (strain ATCC 700893 / DSM 11879 / JCM 9820 / NBRC 100138 / K1).